Reading from the N-terminus, the 824-residue chain is Glycerol-3-phosphate acyltransferase (824 aa).

The HXXXXD motif motif lies at 302 to 307 (CHRSHM).

It belongs to the GPAT/DAPAT family.

It is found in the cell inner membrane. It carries out the reaction sn-glycerol 3-phosphate + an acyl-CoA = a 1-acyl-sn-glycero-3-phosphate + CoA. It functions in the pathway phospholipid metabolism; CDP-diacylglycerol biosynthesis; CDP-diacylglycerol from sn-glycerol 3-phosphate: step 1/3. In Actinobacillus pleuropneumoniae serotype 7 (strain AP76), this protein is Glycerol-3-phosphate acyltransferase.